The sequence spans 272 residues: Shikimate dehydrogenase (NADP(+)) (272 aa).

Residues 19-21 and Thr-66 each bind shikimate; that span reads SLS. The Proton acceptor role is filled by Lys-70. NADP(+) is bound at residue Glu-82. Shikimate-binding residues include Asn-91 and Asp-106. Residues 129–133, 151–156, and Ile-214 contribute to the NADP(+) site; these read GAGGA and NRTPEK. Residue Tyr-216 participates in shikimate binding. Gly-237 is an NADP(+) binding site.

It belongs to the shikimate dehydrogenase family. In terms of assembly, homodimer.

The catalysed reaction is shikimate + NADP(+) = 3-dehydroshikimate + NADPH + H(+). It participates in metabolic intermediate biosynthesis; chorismate biosynthesis; chorismate from D-erythrose 4-phosphate and phosphoenolpyruvate: step 4/7. Functionally, involved in the biosynthesis of the chorismate, which leads to the biosynthesis of aromatic amino acids. Catalyzes the reversible NADPH linked reduction of 3-dehydroshikimate (DHSA) to yield shikimate (SA). This chain is Shikimate dehydrogenase (NADP(+)), found in Thermococcus kodakarensis (strain ATCC BAA-918 / JCM 12380 / KOD1) (Pyrococcus kodakaraensis (strain KOD1)).